We begin with the raw amino-acid sequence, 321 residues long: Histidine N-alpha-methyltransferase (321 aa).

Y56 contacts L-histidine. S-adenosyl-L-methionine-binding positions include G86, K92, D113, and 141-142; that span reads DF. Residues N166, Y206, and 282–284 contribute to the L-histidine site; that span reads EVS.

This sequence belongs to the methyltransferase superfamily. EgtD family. Monomer.

The enzyme catalyses L-histidine + 3 S-adenosyl-L-methionine = hercynine + 3 S-adenosyl-L-homocysteine + 3 H(+). It functions in the pathway amino-acid biosynthesis; ergothioneine biosynthesis. In terms of biological role, catalyzes the SAM-dependent triple methylation of the alpha-amino group of histidine to form hercynine, a step in the biosynthesis pathway of ergothioneine. Among all the proteinogenic amino acids, only L-histidine is a substrate. This chain is Histidine N-alpha-methyltransferase, found in Mycolicibacterium smegmatis (strain ATCC 700084 / mc(2)155) (Mycobacterium smegmatis).